Consider the following 512-residue polypeptide: Bifunctional purine biosynthesis protein PurH (512 aa).

One can recognise an MGS-like domain in the interval 1 to 144; it reads MKRALVSVSD…KNYHDVTIVV (144 aa).

The protein belongs to the PurH family.

The enzyme catalyses (6R)-10-formyltetrahydrofolate + 5-amino-1-(5-phospho-beta-D-ribosyl)imidazole-4-carboxamide = 5-formamido-1-(5-phospho-D-ribosyl)imidazole-4-carboxamide + (6S)-5,6,7,8-tetrahydrofolate. It carries out the reaction IMP + H2O = 5-formamido-1-(5-phospho-D-ribosyl)imidazole-4-carboxamide. It functions in the pathway purine metabolism; IMP biosynthesis via de novo pathway; 5-formamido-1-(5-phospho-D-ribosyl)imidazole-4-carboxamide from 5-amino-1-(5-phospho-D-ribosyl)imidazole-4-carboxamide (10-formyl THF route): step 1/1. It participates in purine metabolism; IMP biosynthesis via de novo pathway; IMP from 5-formamido-1-(5-phospho-D-ribosyl)imidazole-4-carboxamide: step 1/1. This chain is Bifunctional purine biosynthesis protein PurH, found in Limosilactobacillus reuteri (strain DSM 20016) (Lactobacillus reuteri).